A 127-amino-acid chain; its full sequence is Longitudinals lacking protein-like (127 aa).

The 66-residue stretch at 33–98 (TDVTLACEGQ…MYAGEVNVSQ (66 aa)) folds into the BTB domain.

As to quaternary structure, the BTB domain interacts with the BTB domain of Trl in vitro. Found in a Pc-containing complex.

It is found in the nucleus. In terms of biological role, required, together with Trl, for maintaining the repressed state of target genes including homeotic genes Scr and Ubx. May also be involved in the activation of homeotic genes. Binds to a DNA Polycomb response element (PRE) at the bithorax complex. Also binds to polytene chromosomes at several hundred sites, many of which are shared with Trl and ph-p. Required during embryonic development. The chain is Longitudinals lacking protein-like from Drosophila melanogaster (Fruit fly).